A 440-amino-acid polypeptide reads, in one-letter code: ATP-dependent RNA helicase sub2 (440 aa).

The segment covering 1-16 has biased composition (acidic residues); the sequence is MSHEEDLIDYSDEELQ. A disordered region spans residues 1–42; sequence MSHEEDLIDYSDEELQTTDAAATTAAPASNGEAKKGDLTVSG. The span at 17–28 shows a compositional bias: low complexity; sequence TTDAAATTAAPA. The short motif at 57–85 is the Q motif element; sequence TGFRDFLLKEELLRAITDCGFEHPSEVQQ. Residues 88 to 263 enclose the Helicase ATP-binding domain; the sequence is IPTAILNVDV…KKFMRNPLEV (176 aa). 101–108 provides a ligand contact to ATP; the sequence is AKSGLGKT. The DEAD box motif lies at 210 to 213; it reads DECD. The region spanning 291–436 is the Helicase C-terminal domain; sequence KLNELLDSLE…EYPEGGVDSS (146 aa).

This sequence belongs to the DEAD box helicase family. DECD subfamily.

The protein localises to the nucleus. The catalysed reaction is ATP + H2O = ADP + phosphate + H(+). Functionally, ATP-binding RNA helicase involved in transcription elongation and required for the export of mRNA out of the nucleus. SUB2 also plays a role in pre-mRNA splicing and spliceosome assembly. May be involved in rDNA and telomeric silencing, and maintenance of genome integrity. The chain is ATP-dependent RNA helicase sub2 (sub2) from Aspergillus niger (strain ATCC MYA-4892 / CBS 513.88 / FGSC A1513).